A 280-amino-acid chain; its full sequence is MKKLLISAVSALVLGSGAALANSNVQDHAFSFEGIFGKFDQAQLRRGFQVYSEVCSTCHGMKFVPIRTLSDDGGPQLDPTFVREYAAGLDTIIDKDSGEERDRKETDMFPTRVGDGMGPDLSVMAKARAGFSGPAGSGMNQLFKGIGGPEYIYRYVTGFPEENPACAPEGIDGYYYNEVFQVGGVPDTCKDAAGIKTTHGSWAQMPPALFDDLVTYEDGTPATVDQMGQDVASFLMWAAEPKLVARKQMGLVAVVMLGLLSVMLYLTNKRLWAPYKRQKA.

Positions 1–21 (MKKLLISAVSALVLGSGAALA) are cleaved as a signal peptide. The heme c site is built by Cys-55, Cys-58, His-59, and Met-205. Residues 249-267 (MGLVAVVMLGLLSVMLYLT) traverse the membrane as a helical segment.

In terms of assembly, the main subunits of complex b-c1 are: cytochrome b, cytochrome c1 and the Rieske protein. Binds 1 heme c group covalently per subunit.

Its subcellular location is the cell membrane. In terms of biological role, component of the ubiquinol-cytochrome c reductase complex (complex III or cytochrome b-c1 complex), which is a respiratory chain that generates an electrochemical potential coupled to ATP synthesis. c1 functions as an electron donor to cytochrome c. This Rhodobacter capsulatus (Rhodopseudomonas capsulata) protein is Cytochrome c1 (petC).